The primary structure comprises 342 residues: scyllo-inositol 2-dehydrogenase (NAD(+)) (342 aa).

It belongs to the Gfo/Idh/MocA family.

It catalyses the reaction scyllo-inositol + NAD(+) = scyllo-inosose + NADH + H(+). It functions in the pathway polyol metabolism. In terms of biological role, catalyzes the reversible NAD(+)-dependent oxidation of scyllo-inositol (SI) to 2,4,6/3,5-pentahydroxycyclohexanone (scyllo-inosose or SIS). Is required for SI catabolism that allows B.subtilis to utilize SI as the sole carbon source for growth. Cannot use NADP(+) instead of NAD(+). This is scyllo-inositol 2-dehydrogenase (NAD(+)) from Bacillus subtilis (strain 168).